A 724-amino-acid polypeptide reads, in one-letter code: Aquaglyceroporin-4 (724 aa).

3 disordered regions span residues Met1 to Arg167, Ile248 to Asp267, and Ala302 to Gly396. The Cytoplasmic portion of the chain corresponds to Met1–Leu434. The segment covering Leu87–Asp96 has biased composition (polar residues). A compositionally biased stretch (low complexity) spans Gln252–Gln265. 2 stretches are compositionally biased toward polar residues: residues Ser307–Ser325 and Pro360–Glu370. The chain crosses the membrane as a helical span at residues Ala435–Val455. Over Thr456 to Trp472 the chain is Extracellular. The chain crosses the membrane as a helical span at residues Ala473–Leu493. An NPA 1 motif is present at residues Asn494–Ala496. At Asn494 to Pro513 the chain is on the cytoplasmic side. The chain crosses the membrane as a helical span at residues Met514–Tyr534. Residues Gln535 to Ser567 are Extracellular-facing. Asn565 carries an N-linked (GlcNAc...) asparagine glycan. The helical transmembrane segment at Thr568 to Gly588 threads the bilayer. Residues Asp589–Pro595 lie on the Cytoplasmic side of the membrane. Residues Gly596–Gly616 traverse the membrane as a helical segment. Residues Tyr617–Asp647 are Extracellular-facing. Positions Asn624–Ser626 match the NPA 2 motif. A helical membrane pass occupies residues Val648–Leu668. Topologically, residues Tyr669 to Gln724 are cytoplasmic.

This sequence belongs to the MIP/aquaporin (TC 1.A.8) family.

The protein localises to the membrane. It carries out the reaction H2O(in) = H2O(out). The enzyme catalyses glycerol(in) = glycerol(out). In terms of biological role, water channel required to facilitate the transport of water across membranes. May play a role in the vegetative growth. In Botryotinia fuckeliana (strain B05.10) (Noble rot fungus), this protein is Aquaglyceroporin-4.